The sequence spans 311 residues: Phospholipid phosphatase 3 (311 aa).

Residues 1-33 (MQNYKYDKAIVPESKNGGSPALNNNPRRSGSKR) are Cytoplasmic-facing. Phosphoserine is present on serine 19. A helical membrane pass occupies residues 34 to 54 (VLLICLDLFCLFMAGLPFLII). Topologically, residues 55 to 85 (ETSTIKPYHRGFYCNDESIKYPLKTGETIND) are extracellular. Residues 86-106 (AVLCAVGIVIAILAIITGEFY) traverse the membrane as a helical segment. The Cytoplasmic segment spans residues 107 to 122 (RIYYLKKSRSTIQNPY). Positions 109-110 (YY) match the Dityrosine basolateral targeting motif motif. Residues 123–143 (VAALYKQVGCFLFGCAISQSF) traverse the membrane as a helical segment. At 144–193 (TDIAKVSIGRLRPHFLSVCNPDFSQINCSEGYIQNYRCRGDDSKVQEARK) the chain is on the extracellular side. A phosphatase sequence motif I region spans residues 148–156 (KVSIGRLRP). An N-linked (GlcNAc...) asparagine glycan is attached at asparagine 170. An Integrin-binding motif motif is present at residues 182–184 (RGD). The chain crosses the membrane as a helical span at residues 194-214 (SFFSGHASFSMYTMLYLVLYL). Positions 196–199 (FSGH) are phosphatase sequence motif II. The active-site Proton donors is histidine 199. Over 215–225 (QARFTWRGARL) the chain is Cytoplasmic. The helical transmembrane segment at 226-243 (LRPLLQFTLIMMAFYTGL) threads the bilayer. The phosphatase sequence motif III stretch occupies residues 244 to 255 (SRVSDHKHHPSD). Topologically, residues 244 to 257 (SRVSDHKHHPSDVL) are extracellular. Residue histidine 251 is the Nucleophile of the active site. The chain crosses the membrane as a helical span at residues 258–278 (AGFAQGALVACCIVFFVSDLF). Residues 275–311 (SDLFKTKTTLSLPAPAIRKEILSPVDIIDRNNHHNMM) form a mediates interaction with CTNND1 region. Topologically, residues 279 to 311 (KTKTTLSLPAPAIRKEILSPVDIIDRNNHHNMM) are cytoplasmic.

The protein belongs to the PA-phosphatase related phosphoesterase family. In terms of assembly, forms functional homodimers and homooligomers that are not required for substrate recognition and catalytic activity. Can also form heterooligomers with other PLPP2 and PLPP3. Interacts with CTNND1; negatively regulates the PLPP3-mediated stabilization of beta-catenin/CTNNB1. Post-translationally, N-glycosylated. Contains high-mannose oligosaccharides. As to expression, ubiquitously expressed. Highly expressed in heart and placenta.

It is found in the cell membrane. It localises to the basolateral cell membrane. The protein localises to the endoplasmic reticulum membrane. The protein resides in the endoplasmic reticulum-Golgi intermediate compartment membrane. Its subcellular location is the golgi apparatus membrane. It is found in the golgi apparatus. It localises to the trans-Golgi network membrane. The protein localises to the membrane raft. It catalyses the reaction a 1,2-diacyl-sn-glycero-3-phosphate + H2O = a 1,2-diacyl-sn-glycerol + phosphate. It carries out the reaction 1,2-dihexadecanoyl-sn-glycero-3-phosphate + H2O = 1,2-dihexadecanoyl-sn-glycerol + phosphate. The enzyme catalyses 1,2-di-(9Z-octadecenoyl)-sn-glycero-3-phosphate + H2O = 1,2-di-(9Z-octadecenoyl)-sn-glycerol + phosphate. The catalysed reaction is a monoacyl-sn-glycero-3-phosphate + H2O = a monoacylglycerol + phosphate. It catalyses the reaction (9Z)-octadecenoyl-sn-glycero-3-phosphate + H2O = (9Z-octadecenoyl)-glycerol + phosphate. It carries out the reaction sphing-4-enine 1-phosphate + H2O = sphing-4-enine + phosphate. The enzyme catalyses an N-acylsphing-4-enine 1-phosphate + H2O = an N-acylsphing-4-enine + phosphate. The catalysed reaction is N-(octanoyl)-sphing-4-enine-1-phosphate + H2O = N-octanoylsphing-4-enine + phosphate. It catalyses the reaction N-(9Z-octadecenoyl)-ethanolamine phosphate + H2O = N-(9Z-octadecenoyl) ethanolamine + phosphate. It participates in lipid metabolism; phospholipid metabolism. Magnesium-independent phospholipid phosphatase. Insensitive to N-ethylmaleimide. Inhibited by sphingosine, zinc ions and modestly by propanolol. In terms of biological role, magnesium-independent phospholipid phosphatase of the plasma membrane that catalyzes the dephosphorylation of a variety of glycerolipid and sphingolipid phosphate esters including phosphatidate/PA, lysophosphatidate/LPA, diacylglycerol pyrophosphate/DGPP, sphingosine 1-phosphate/S1P and ceramide 1-phosphate/C1P. Also acts on N-oleoyl ethanolamine phosphate/N-(9Z-octadecenoyl)-ethanolamine phosphate, a potential physiological compound. Has both an extracellular and an intracellular phosphatase activity, allowing the hydrolysis and the cellular uptake of these bioactive lipid mediators from the milieu, regulating signal transduction in different cellular processes. Through the dephosphorylation of extracellular sphingosine-1-phosphate and the regulation of its extra- and intracellular availability, plays a role in vascular homeostasis, regulating endothelial cell migration, adhesion, survival, proliferation and the production of pro-inflammatory cytokines. By maintaining the appropriate levels of this lipid in the cerebellum, also ensure its proper development and function. Through its intracellular lipid phosphatase activity may act in early compartments of the secretory pathway, regulating the formation of Golgi to endoplasmic reticulum retrograde transport carriers. Its function is as follows. Independently of this phosphatase activity may also function in the Wnt signaling pathway and the stabilization of beta-catenin/CTNNB1, thereby regulating cell proliferation, migration and differentiation in angiogenesis or yet in tumor growth. Also plays a role in integrin-mediated cell-cell adhesion in angiogenesis. In Homo sapiens (Human), this protein is Phospholipid phosphatase 3.